We begin with the raw amino-acid sequence, 896 residues long: Protein translocase subunit SecA (896 aa).

Residues glutamine 87, 105-109 (GEGKT), and aspartate 512 each bind ATP. The disordered stretch occupies residues 867-889 (QEPARSNRVAGRNDPCPCGSGKK). Positions 882, 884, 893, and 894 each coordinate Zn(2+).

It belongs to the SecA family. As to quaternary structure, monomer and homodimer. Part of the essential Sec protein translocation apparatus which comprises SecA, SecYEG and auxiliary proteins SecDF-YajC and YidC. Zn(2+) is required as a cofactor.

The protein localises to the cell inner membrane. Its subcellular location is the cytoplasm. It catalyses the reaction ATP + H2O + cellular proteinSide 1 = ADP + phosphate + cellular proteinSide 2.. Its function is as follows. Part of the Sec protein translocase complex. Interacts with the SecYEG preprotein conducting channel. Has a central role in coupling the hydrolysis of ATP to the transfer of proteins into and across the cell membrane, serving as an ATP-driven molecular motor driving the stepwise translocation of polypeptide chains across the membrane. This chain is Protein translocase subunit SecA, found in Pelobacter propionicus (strain DSM 2379 / NBRC 103807 / OttBd1).